The following is a 396-amino-acid chain: Putative protein IntB (396 aa).

A Core-binding (CB) domain is found at 71 to 151 (RTFKEVAIEW…RTTAIMRYAV (81 aa)). Residues 174-367 (QHRPALELKR…EHLEERRLML (194 aa)) form the Tyr recombinase domain. Active-site residues include arginine 213, lysine 252, histidine 316, arginine 319, and histidine 343. Residue tyrosine 353 is the O-(3'-phospho-DNA)-tyrosine intermediate of the active site.

Belongs to the 'phage' integrase family.

This is Putative protein IntB (intB) from Escherichia coli (strain K12).